The primary structure comprises 684 residues: Putative glucan endo-1,3-beta-glucosidase btgC (684 aa).

Positions 1-10 (MAGVNRSFSY) are enriched in polar residues. Disordered regions lie at residues 1 to 38 (MAGV…LYST), 124 to 143 (AERD…APPD), and 157 to 182 (DSYS…TTPS). Residues 1–302 (MAGVNRSFSY…HIIGGGSRKR (302 aa)) lie on the Cytoplasmic side of the membrane. Residues 12 to 32 (RGDDALLRDDEREISPLRSAE) show a composition bias toward basic and acidic residues. The helical; Signal-anchor for type II membrane protein transmembrane segment at 303-323 (GWIVGLILAAVIVAAIVGGAV) threads the bilayer. Residues 324-684 (GGILGHQEHD…IPDCGGKTIT (361 aa)) are Extracellular-facing. The tract at residues 330–358 (QEHDGDTSSSSSSSSSSGTGSGGSDKGDG) is disordered. Residues 336–347 (TSSSSSSSSSSG) show a composition bias toward low complexity. Asparagine 404, asparagine 427, asparagine 455, and asparagine 474 each carry an N-linked (GlcNAc...) asparagine glycan. The active-site Proton donor is the glutamate 487. Glutamate 586 serves as the catalytic Nucleophile. Asparagine 631 carries N-linked (GlcNAc...) asparagine glycosylation.

The protein belongs to the glycosyl hydrolase 17 family.

It is found in the cell membrane. It carries out the reaction Hydrolysis of (1-&gt;3)-beta-D-glucosidic linkages in (1-&gt;3)-beta-D-glucans.. In terms of biological role, glucanases play a role in cell expansion during growth, in cell-cell fusion during mating, and in spore release during sporulation. This enzyme may be involved in beta-glucan degradation. Active on laminarin and lichenan. This Aspergillus niger (strain ATCC MYA-4892 / CBS 513.88 / FGSC A1513) protein is Putative glucan endo-1,3-beta-glucosidase btgC (btgC).